A 249-amino-acid polypeptide reads, in one-letter code: 2,3-bisphosphoglycerate-dependent phosphoglycerate mutase (249 aa).

Residues 11 to 18 (RHGNSEWN), 24 to 25 (TG), arginine 63, 90 to 93 (ERHY), lysine 101, 117 to 118 (RR), and 185 to 186 (GN) contribute to the substrate site. The active-site Tele-phosphohistidine intermediate is histidine 12. Residue glutamate 90 is the Proton donor/acceptor of the active site.

This sequence belongs to the phosphoglycerate mutase family. BPG-dependent PGAM subfamily.

The enzyme catalyses (2R)-2-phosphoglycerate = (2R)-3-phosphoglycerate. It functions in the pathway carbohydrate degradation; glycolysis; pyruvate from D-glyceraldehyde 3-phosphate: step 3/5. In terms of biological role, catalyzes the interconversion of 2-phosphoglycerate and 3-phosphoglycerate. The sequence is that of 2,3-bisphosphoglycerate-dependent phosphoglycerate mutase from Leifsonia xyli subsp. xyli (strain CTCB07).